Consider the following 493-residue polypeptide: Probable cytosol aminopeptidase (493 aa).

Residues K260 and D265 each coordinate Mn(2+). The active site involves K272. Mn(2+) is bound by residues D283, D342, and E344. R346 is a catalytic residue.

This sequence belongs to the peptidase M17 family. Requires Mn(2+) as cofactor.

It localises to the cytoplasm. It catalyses the reaction Release of an N-terminal amino acid, Xaa-|-Yaa-, in which Xaa is preferably Leu, but may be other amino acids including Pro although not Arg or Lys, and Yaa may be Pro. Amino acid amides and methyl esters are also readily hydrolyzed, but rates on arylamides are exceedingly low.. The enzyme catalyses Release of an N-terminal amino acid, preferentially leucine, but not glutamic or aspartic acids.. In terms of biological role, presumably involved in the processing and regular turnover of intracellular proteins. Catalyzes the removal of unsubstituted N-terminal amino acids from various peptides. The polypeptide is Probable cytosol aminopeptidase (Clostridium perfringens (strain 13 / Type A)).